Here is a 298-residue protein sequence, read N- to C-terminus: Enoyl-CoA hydratase AFT6-1 (298 aa).

Positions 1–39 are disordered; the sequence is MTYSTTKSVAMNPDEDAPPSDINSSGRLMSHSEVEPRGN.

Belongs to the enoyl-CoA hydratase/isomerase family.

The enzyme catalyses a (3S)-3-hydroxyacyl-CoA = a (2E)-enoyl-CoA + H2O. It catalyses the reaction a 4-saturated-(3S)-3-hydroxyacyl-CoA = a (3E)-enoyl-CoA + H2O. It participates in mycotoxin biosynthesis. In terms of biological role, enoyl-CoA hydratase; part of the gene clusters that mediate the biosynthesis of the host-selective toxins (HSTs) AF-toxins responsible for Alternaria black spot of strawberry disease by the strawberry pathotype. AF-toxin I and III are valine derivatives of 2,3-dyhydroxy-isovaleric acid and 2-hydroxy-isovaleric acid respectively, while AF II is an isoleucine derivative of 2-hydroxy-valeric acid. These derivatives are bound to a 9,10-epoxy-8-hydroxy-9-methyl-decatrienoic acid (EDA) moiety. On cellular level, AF-toxin affects plasma membrane of susceptible cells and cause a sudden increase in loss of K(+) after a few minutes of toxin treatment. The aldo-keto reductase AFTS1 catalyzes the conversion of 2-keto-isovaleric acid (2-KIV) to 2-hydroxy-isovaleric acid (2-HIV) by reduction of its ketone to an alcohol. The acyl-CoA ligase AFT1, the hydrolase AFT2 and the enoyl-CoA hydratases AFT3 and AFT6, but also the polyketide synthase AFT9, the acyl-CoA dehydrogenase AFT10, the cytochrome P450 monooxygenase AFT11 and the oxidoreductase AFT12 are all involved in the biosynthesis of the AK-, AF- and ACT-toxin common EDA structural moiety. The exact function of each enzyme, and of additional enzymes identified within the AF-toxin clusters have still to be determined. The chain is Enoyl-CoA hydratase AFT6-1 from Alternaria alternata (Alternaria rot fungus).